Reading from the N-terminus, the 352-residue chain is Small ribosomal subunit biogenesis GTPase RsgA (352 aa).

Residues Met1–Arg21 are compositionally biased toward basic residues. The tract at residues Met1–Ala38 is disordered. The region spanning Phe116–Phe278 is the CP-type G domain. Residues Asn164 to Asp167 and Gly218 to Ser226 contribute to the GTP site. Zn(2+)-binding residues include Cys302, Cys307, His309, and Cys315.

It belongs to the TRAFAC class YlqF/YawG GTPase family. RsgA subfamily. As to quaternary structure, monomer. Associates with 30S ribosomal subunit, binds 16S rRNA. Zn(2+) serves as cofactor.

The protein resides in the cytoplasm. Its function is as follows. One of several proteins that assist in the late maturation steps of the functional core of the 30S ribosomal subunit. Helps release RbfA from mature subunits. May play a role in the assembly of ribosomal proteins into the subunit. Circularly permuted GTPase that catalyzes slow GTP hydrolysis, GTPase activity is stimulated by the 30S ribosomal subunit. The chain is Small ribosomal subunit biogenesis GTPase RsgA from Hamiltonella defensa subsp. Acyrthosiphon pisum (strain 5AT).